The following is a 140-amino-acid chain: Myelodysplastic syndrome 2 translocation-associated protein (140 aa).

Highly expressed in peripheral blood leukocytes, spleen, thymus, kidney, pancreas and lung.

This chain is Myelodysplastic syndrome 2 translocation-associated protein (MDS2), found in Homo sapiens (Human).